The chain runs to 263 residues: 3'-5' ssDNA/RNA exonuclease TatD (263 aa).

A divalent metal cation is bound by residues glutamate 91, histidine 127, and histidine 152.

This sequence belongs to the metallo-dependent hydrolases superfamily. TatD-type hydrolase family. TatD subfamily. Monomer. The cofactor is Mg(2+).

The protein resides in the cytoplasm. 3'-5' exonuclease that prefers single-stranded DNA and RNA. May play a role in the H(2)O(2)-induced DNA damage repair. The protein is 3'-5' ssDNA/RNA exonuclease TatD of Cronobacter turicensis (strain DSM 18703 / CCUG 55852 / LMG 23827 / z3032).